Here is a 234-residue protein sequence, read N- to C-terminus: Large ribosomal subunit protein uL1 (234 aa).

It belongs to the universal ribosomal protein uL1 family. As to quaternary structure, part of the 50S ribosomal subunit.

Its function is as follows. Binds directly to 23S rRNA. The L1 stalk is quite mobile in the ribosome, and is involved in E site tRNA release. In terms of biological role, protein L1 is also a translational repressor protein, it controls the translation of the L11 operon by binding to its mRNA. The chain is Large ribosomal subunit protein uL1 from Serratia marcescens.